Here is a 338-residue protein sequence, read N- to C-terminus: Glyceraldehyde-3-phosphate dehydrogenase, cytosolic (338 aa).

NAD(+) contacts are provided by residues 14–15 (RI), Asp-36, and Arg-83. D-glyceraldehyde 3-phosphate contacts are provided by residues 154-156 (SCT), Thr-185, 214-215 (TG), and Arg-237. Catalysis depends on Cys-155, which acts as the Nucleophile. Asn-319 serves as a coordination point for NAD(+).

It belongs to the glyceraldehyde-3-phosphate dehydrogenase family. In terms of assembly, homotetramer.

Its subcellular location is the cytoplasm. The catalysed reaction is D-glyceraldehyde 3-phosphate + phosphate + NAD(+) = (2R)-3-phospho-glyceroyl phosphate + NADH + H(+). It participates in carbohydrate degradation; glycolysis; pyruvate from D-glyceraldehyde 3-phosphate: step 1/5. Its function is as follows. Key enzyme in glycolysis that catalyzes the first step of the pathway by converting D-glyceraldehyde 3-phosphate (G3P) into 3-phospho-D-glyceroyl phosphate. Essential for the maintenance of cellular ATP levels and carbohydrate metabolism. This is Glyceraldehyde-3-phosphate dehydrogenase, cytosolic (GAPC1) from Pisum sativum (Garden pea).